Consider the following 221-residue polypeptide: CASP-like protein 2U10 (221 aa).

Residues Met-1 to Lys-22 form a disordered region. Topologically, residues Met-1 to Arg-31 are cytoplasmic. The chain crosses the membrane as a helical span at residues Ile-32–Met-52. Residues Val-53–Asp-91 lie on the Extracellular side of the membrane. A helical membrane pass occupies residues Ala-92–Ala-112. The Cytoplasmic portion of the chain corresponds to Thr-113–Ser-122. The chain crosses the membrane as a helical span at residues Val-123–Ala-143. Residues Val-144–Val-174 lie on the Extracellular side of the membrane. The chain crosses the membrane as a helical span at residues Tyr-175 to Ile-195. At Ser-196 to Met-221 the chain is on the cytoplasmic side.

It belongs to the Casparian strip membrane proteins (CASP) family. As to quaternary structure, homodimer and heterodimers.

The protein localises to the cell membrane. This chain is CASP-like protein 2U10, found in Selaginella moellendorffii (Spikemoss).